Reading from the N-terminus, the 473-residue chain is Ribulose bisphosphate carboxylase large chain 1 (473 aa).

2 residues coordinate substrate: Asn-116 and Thr-166. Lys-168 (proton acceptor) is an active-site residue. Substrate is bound at residue Lys-170. Lys-194, Asp-196, and Glu-197 together coordinate Mg(2+). N6-carboxylysine is present on Lys-194. The Proton acceptor role is filled by His-287. Arg-288, His-320, and Ser-372 together coordinate substrate.

The protein belongs to the RuBisCO large chain family. Type I subfamily. Heterohexadecamer of 8 large chains and 8 small chains. It depends on Mg(2+) as a cofactor.

It carries out the reaction 2 (2R)-3-phosphoglycerate + 2 H(+) = D-ribulose 1,5-bisphosphate + CO2 + H2O. It catalyses the reaction D-ribulose 1,5-bisphosphate + O2 = 2-phosphoglycolate + (2R)-3-phosphoglycerate + 2 H(+). Its function is as follows. RuBisCO catalyzes two reactions: the carboxylation of D-ribulose 1,5-bisphosphate, the primary event in carbon dioxide fixation, as well as the oxidative fragmentation of the pentose substrate. Both reactions occur simultaneously and in competition at the same active site. This chain is Ribulose bisphosphate carboxylase large chain 1, found in Acidithiobacillus ferrooxidans (strain ATCC 23270 / DSM 14882 / CIP 104768 / NCIMB 8455) (Ferrobacillus ferrooxidans (strain ATCC 23270)).